Consider the following 506-residue polypeptide: Glutamate--tRNA ligase (506 aa).

A 'HIGH' region motif is present at residues 24–34 (PSPTGLQHIGG). Zn(2+) is bound by residues cysteine 121, cysteine 123, cysteine 148, and histidine 150. Positions 266–270 (KLSKR) match the 'KMSKS' region motif. Lysine 269 contacts ATP.

This sequence belongs to the class-I aminoacyl-tRNA synthetase family. Glutamate--tRNA ligase type 1 subfamily. As to quaternary structure, monomer. Requires Zn(2+) as cofactor.

Its subcellular location is the cytoplasm. It carries out the reaction tRNA(Glu) + L-glutamate + ATP = L-glutamyl-tRNA(Glu) + AMP + diphosphate. In terms of biological role, catalyzes the attachment of glutamate to tRNA(Glu) in a two-step reaction: glutamate is first activated by ATP to form Glu-AMP and then transferred to the acceptor end of tRNA(Glu). This chain is Glutamate--tRNA ligase, found in Borrelia recurrentis (strain A1).